A 455-amino-acid polypeptide reads, in one-letter code: tRNA modification GTPase MnmE (455 aa).

Arginine 24, glutamate 81, and lysine 120 together coordinate (6S)-5-formyl-5,6,7,8-tetrahydrofolate. In terms of domain architecture, TrmE-type G spans 216–378 (GMTVVIAGRP…LREHLKACMG (163 aa)). Asparagine 226 contacts K(+). Residues 226–231 (NAGKSS), 245–251 (TDIAGTT), 270–273 (DTAG), and 335–338 (NKAD) contribute to the GTP site. Serine 230 provides a ligand contact to Mg(2+). Threonine 245, isoleucine 247, and threonine 250 together coordinate K(+). Threonine 251 provides a ligand contact to Mg(2+). Lysine 455 provides a ligand contact to (6S)-5-formyl-5,6,7,8-tetrahydrofolate.

This sequence belongs to the TRAFAC class TrmE-Era-EngA-EngB-Septin-like GTPase superfamily. TrmE GTPase family. Homodimer. Heterotetramer of two MnmE and two MnmG subunits. Requires K(+) as cofactor.

It localises to the cytoplasm. Its function is as follows. Exhibits a very high intrinsic GTPase hydrolysis rate. Involved in the addition of a carboxymethylaminomethyl (cmnm) group at the wobble position (U34) of certain tRNAs, forming tRNA-cmnm(5)s(2)U34. The sequence is that of tRNA modification GTPase MnmE from Ectopseudomonas mendocina (strain ymp) (Pseudomonas mendocina).